The sequence spans 864 residues: Mitochondrial 15S rRNA processing factor CCM1 (864 aa).

The transit peptide at 1–76 (MYMARCGPKN…REFSNTLKER (76 aa)) directs the protein to the mitochondrion. PPR repeat units lie at residues 319–353 (NKQN…STKH) and 356–390 (DICT…NIKP).

The protein belongs to the CCM1 family. In terms of assembly, binds to mitochondrial small subunit 15S rRNA.

The protein localises to the mitochondrion. In terms of biological role, regulates mitochondrial small subunit maturation by controlling 15S rRNA 5'-end processing. Localizes to the 5' precursor of the 15S rRNA in a position that is subsequently occupied by mS47 in the mature yeast mtSSU. Uses structure and sequence-specific RNA recognition, binding to a single-stranded region of the precursor and specifically recognizing bases -6 to -1. The exchange of Ccm1 for mS47 is coupled to the irreversible removal of precursor rRNA that is accompanied by conformational changes of the mitoribosomal proteins uS5m and mS26. These conformational changes signal completion of 5'-end rRNA processing through protection of the mature 5'-end of the 15S rRNA and stabilization of mS47. The removal of the 5' precursor together with the dissociation of Ccm1 may be catalyzed by the 5'-3' exoribonuclease Pet127. Involved in the specific removal of group I introns in mitochondrial encoded transcripts. This is Mitochondrial 15S rRNA processing factor CCM1 (CCM1) from Saccharomyces cerevisiae (strain RM11-1a) (Baker's yeast).